The chain runs to 295 residues: Bifunctional protein FolD (295 aa).

NADP(+)-binding positions include 169–171 (GRG), threonine 196, and valine 237.

The protein belongs to the tetrahydrofolate dehydrogenase/cyclohydrolase family. In terms of assembly, homodimer.

The enzyme catalyses (6R)-5,10-methylene-5,6,7,8-tetrahydrofolate + NADP(+) = (6R)-5,10-methenyltetrahydrofolate + NADPH. It catalyses the reaction (6R)-5,10-methenyltetrahydrofolate + H2O = (6R)-10-formyltetrahydrofolate + H(+). The protein operates within one-carbon metabolism; tetrahydrofolate interconversion. In terms of biological role, catalyzes the oxidation of 5,10-methylenetetrahydrofolate to 5,10-methenyltetrahydrofolate and then the hydrolysis of 5,10-methenyltetrahydrofolate to 10-formyltetrahydrofolate. The sequence is that of Bifunctional protein FolD from Kineococcus radiotolerans (strain ATCC BAA-149 / DSM 14245 / SRS30216).